A 418-amino-acid polypeptide reads, in one-letter code: Homoaconitase large subunit (418 aa).

[4Fe-4S] cluster-binding residues include Cys292, Cys352, and Cys355.

Belongs to the aconitase/IPM isomerase family. As to quaternary structure, heterodimer of HacA and HacB. [4Fe-4S] cluster is required as a cofactor.

It catalyses the reaction (2R,3S)-homoisocitrate = cis-homoaconitate + H2O. It functions in the pathway amino-acid biosynthesis; L-lysine biosynthesis via AAA pathway; L-alpha-aminoadipate from 2-oxoglutarate: step 3/5. Is not inhibited by lysine. Catalyzes the reversible hydration of cis-homoaconitate ((Z)-but-1-ene-1,2,4-tricarboxylate) to homoisocitrate ((1R,2S)-1-hydroxybutane-1,2,4-tricarboxylate). Can catalyze neither the dehydration of (R)-homocitrate ((2R)-2-hydroxybutane-1,2,4-tricarboxylate) into cis-homoaconitate in vitro, nor the reverse reaction. Is not active toward (S)-homocitrate, cis-aconitate or citrate as substrate. This Thermus thermophilus (strain ATCC BAA-163 / DSM 7039 / HB27) protein is Homoaconitase large subunit (hacA).